Reading from the N-terminus, the 351-residue chain is uncharacterized protein (351 aa).

The first 27 residues, 1–27 (MKNKKRVLIASSLSCAILLLSAATTQA), serve as a signal peptide directing secretion. The interval 28-71 (NSAHKDSQDQNKKEHVDKSQQKDKRNVTNKDKNSTVPDDIGKNG) is disordered. A compositionally biased stretch (basic and acidic residues) spans 30–60 (AHKDSQDQNKKEHVDKSQQKDKRNVTNKDKN).

It belongs to the aerolysin family.

This is an uncharacterized protein from Staphylococcus aureus (strain N315).